We begin with the raw amino-acid sequence, 136 residues long: Secreted RxLR effector protein 15 (136 aa).

The signal sequence occupies residues Met1–Ala22. The RxLR signature appears at Arg47–Arg50.

It belongs to the RxLR effector family.

The protein resides in the secreted. The protein localises to the host nucleus. It localises to the host cytoplasm. In terms of biological role, effector that completely suppresses the host cell death induced by cell death-inducing proteins. In Plasmopara viticola (Downy mildew of grapevine), this protein is Secreted RxLR effector protein 15.